The following is a 277-amino-acid chain: Phosphatidylglycerol--prolipoprotein diacylglyceryl transferase (277 aa).

4 helical membrane-spanning segments follow: residues 18–38, 51–71, 89–109, and 116–136; these read ISVKWYGVIIASAVVIALLLA, IIVDLLIWAIPISIISARIYY, IWHGGIAIYGALIGAVLTAII, and ISFWQLADVVAPSLIIAQAIG. Arg137 contributes to the a 1,2-diacyl-sn-glycero-3-phospho-(1'-sn-glycerol) binding site. 3 consecutive transmembrane segments (helical) span residues 177–197, 205–225, and 235–255; these read QPTFLYESLWNVLGFIVLLII, GELFLGYVIWYSFGRFFIEGM, and FRVSQVLSLLLIVLSIGIIIY.

It belongs to the Lgt family.

The protein resides in the cell membrane. It carries out the reaction L-cysteinyl-[prolipoprotein] + a 1,2-diacyl-sn-glycero-3-phospho-(1'-sn-glycerol) = an S-1,2-diacyl-sn-glyceryl-L-cysteinyl-[prolipoprotein] + sn-glycerol 1-phosphate + H(+). It participates in protein modification; lipoprotein biosynthesis (diacylglyceryl transfer). Functionally, catalyzes the transfer of the diacylglyceryl group from phosphatidylglycerol to the sulfhydryl group of the N-terminal cysteine of a prolipoprotein, the first step in the formation of mature lipoproteins. The protein is Phosphatidylglycerol--prolipoprotein diacylglyceryl transferase of Listeria monocytogenes serotype 4b (strain CLIP80459).